We begin with the raw amino-acid sequence, 182 residues long: Ribulose bisphosphate carboxylase small subunit, chloroplastic 4 (182 aa).

Residues 1–41 constitute a chloroplast transit peptide; sequence MAATMMNKTVVLSKGCTKPSAVPKVSINRKGFLNTAMNKKR.

Belongs to the RuBisCO small chain family. As to quaternary structure, heterohexadecamer of 8 large and 8 small subunits.

It localises to the plastid. Its subcellular location is the chloroplast. In terms of biological role, ruBisCO catalyzes two reactions: the carboxylation of D-ribulose 1,5-bisphosphate, the primary event in carbon dioxide fixation, as well as the oxidative fragmentation of the pentose substrate. Both reactions occur simultaneously and in competition at the same active site. Although the small subunit is not catalytic it is essential for maximal activity. The protein is Ribulose bisphosphate carboxylase small subunit, chloroplastic 4 of Acetabularia peniculus (Green alga).